The primary structure comprises 780 residues: MDQNSVPEKAQNEADTNNADRFFRSHSSPPHHRPGHSRALHHYELHHHGVPHQRGESHHPPEFQDFHDQALSSHVHQSHHHSEARNHGRAHGPTGFGLAPSQGAVPSHRSYGEDYHDELQRDGRRHHDGSQYGGFHQQSDSHYHRGSHHGRPQYLGENLSHYSSGVPHHGEASHHGGSYLPHGPNPYSESFHHSEASHLSGLQHDESQHHQVPHRGWPHHHQVHHHGRSRHHEAHQHGKSPHHGETISPHSSVGSYQRGISDYHSEYHQGDHHPSEYHHGDHPHHTQHHYHQTHRHRDYHQHQDHHGAYHSSYLHGDYVQSTSQLSIPHTSRSLIHDAPGPAASRTGVFPYHVAHPRGSAHSMTRSSSTIRSRVTQMSKKVHTQDISTKHSEDWGKEEGQFQKRKTGRLQRTRKKGHSTNLFQWLWEKLTFLIQGFREMIRNLTQSLAFETFIFFVVCLNTVMLVAQTFAEVEIRGEWYFMALDSIFFCIYVVEALLKIIALGLSYFFDFWNNLDFFIMAMAVLDFLLMQTHSFAIYHQSLFRILKVFKSLRALRAIRVLRRLSFLTSVQEVTGTLGQSLPSIAAILILMFTCLFLFSAVLRALFRKSDPKRFQNIFTTIFTLFTLLTLDDWSLIYMDSRAQGAWYIIPILVIYIIIQYFIFLNLVITVLVDSFQTALFKGLEKAKQERAARIQEKLLEDSLTELRAAEPKEVASEGTMLKRLIEKKFGTMTEKQQELLFHYLQLVASVEQEQQKFRSQAAVIDEIVDTTFEAGEEDFRN.

Disordered regions lie at residues 1-37 (MDQNSVPEKAQNEADTNNADRFFRSHSSPPHHRPGHS), 71-306 (LSSH…QDHH), and 376-412 (QMSKKVHTQDISTKHSEDWGKEEGQFQKRKTGRLQRT). The Cytoplasmic segment spans residues 1–447 (MDQNSVPEKA…EMIRNLTQSL (447 aa)). The segment covering 110 to 122 (SYGEDYHDELQRD) has biased composition (basic and acidic residues). Over residues 211 to 241 (QVPHRGWPHHHQVHHHGRSRHHEAHQHGKSP) the composition is skewed to basic residues. Positions 261–284 (SDYHSEYHQGDHHPSEYHHGDHPH) are enriched in basic and acidic residues. Positions 285–299 (HTQHHYHQTHRHRDY) are enriched in basic residues. Basic and acidic residues predominate over residues 387–401 (STKHSEDWGKEEGQF). Residues 402 to 412 (QKRKTGRLQRT) are compositionally biased toward basic residues. A helical transmembrane segment spans residues 448-469 (AFETFIFFVVCLNTVMLVAQTF). Residues 470–478 (AEVEIRGEW) are Extracellular-facing. A helical membrane pass occupies residues 479–500 (YFMALDSIFFCIYVVEALLKII). The Cytoplasmic portion of the chain corresponds to 501–508 (ALGLSYFF). Residues 509-531 (DFWNNLDFFIMAMAVLDFLLMQT) traverse the membrane as a helical segment. Over 532-540 (HSFAIYHQS) the chain is Extracellular. Residues 541 to 563 (LFRILKVFKSLRALRAIRVLRRL) form a helical membrane-spanning segment. Residues 564 to 581 (SFLTSVQEVTGTLGQSLP) lie on the Cytoplasmic side of the membrane. A helical transmembrane segment spans residues 582–604 (SIAAILILMFTCLFLFSAVLRAL). Residues 605–615 (FRKSDPKRFQN) are Extracellular-facing. Positions 616-628 (IFTTIFTLFTLLT) form an intramembrane region, helical; Pore-forming. At 629–645 (LDDWSLIYMDSRAQGAW) the chain is on the extracellular side. The helical transmembrane segment at 646-671 (YIIPILVIYIIIQYFIFLNLVITVLV) threads the bilayer. The Cytoplasmic portion of the chain corresponds to 672–780 (DSFQTALFKG…FEAGEEDFRN (109 aa)).

Belongs to the cation channel sperm-associated (TC 1.A.1.19) family. Component of the CatSper complex or CatSpermasome composed of the core pore-forming members CATSPER1, CATSPER2, CATSPER3 and CATSPER4 as well as auxiliary members CATSPERB, CATSPERG, CATSPERD, CATSPERE, CATSPERZ, C2CD6/CATSPERT, TMEM249, TMEM262 and EFCAB9. HSPA1 may be an additional auxiliary complex member. The core complex members CATSPER1, CATSPER2, CATSPER3 and CATSPER4 form a heterotetrameric channel. The auxiliary CATSPERB, CATSPERG, CATSPERD and CATSPERE subunits form a pavilion-like structure over the pore which stabilizes the complex through interactions with CATSPER4, CATSPER3, CATSPER1 and CATSPER2 respectively. TMEM262/CATSPERH interacts with CATSPERB, further stabilizing the complex. C2CD6/CATSPERT interacts at least with CATSPERD and is required for targeting the CatSper complex in the flagellar membrane. Interacts with Ca(v)3.3/CACNA1I, leading to suppression of T-type calcium channel activity. As to expression, testis-specific.

It is found in the cell projection. It localises to the cilium. The protein resides in the flagellum membrane. The catalysed reaction is Ca(2+)(in) = Ca(2+)(out). Its activity is regulated as follows. The CatSper calcium channel is indirectly activated by extracellular progesterone and prostaglandins following the sequence: progesterone &gt; PGF1-alpha = PGE1 &gt; PGA1 &gt; PGE2 &gt;&gt; PGD2. The CatSper calcium channel is directly inhibited by endocannabinoid 2-arachidonoylglycerol (2AG). Indirect activation by progesterone takes place via the following mechanism: progesterone binds and activates the acylglycerol lipase ABHD2, which in turn mediates hydrolysis of 2AG inhibitor, relieving inhibition of the CatSper channel. The primary effect of progesterone activation is to shift voltage dependence towards more physiological, negative membrane potentials; it is not mediated by metabotropic receptors and second messengers. Sperm capacitation enhances the effect of progesterone by providing additional negative shift. Also activated by the elevation of intracellular pH. Functionally, pore-forming subunit of the CatSper complex, a sperm-specific voltage-gated calcium channel that plays a central role in calcium-dependent physiological responses essential for successful fertilization, such as sperm hyperactivation, acrosome reaction and chemotaxis towards the oocyte. This chain is Cation channel sperm-associated protein 1 (CATSPER1), found in Homo sapiens (Human).